A 335-amino-acid polypeptide reads, in one-letter code: Putative SWIB domain-containing protein R508 (335 aa).

The span at 1–12 (MSKRVTSSKKSK) shows a compositional bias: basic residues. A disordered region spans residues 1 to 182 (MSKRVTSSKK…NKKSPKKLLN (182 aa)). Positions 24-33 (KNLSKTSKSV) are enriched in low complexity. The segment covering 60-75 (NIGGSKSSRTYNSEGS) has biased composition (polar residues). Over residues 83–109 (SSKDSKVIKKNKQKVESSDSEKHSENK) the composition is skewed to basic and acidic residues. Over residues 110–126 (SHKKSSKSSSISRKKPI) the composition is skewed to basic residues. Residues 163-173 (KGEDNNDEKQN) show a composition bias toward basic and acidic residues. A coiled-coil region spans residues 181 to 217 (LNEKKISSESFDDKLNELREELRENYIRQKKIMNDIK). One can recognise an SWIB/MDM2 domain in the interval 244–326 (GFNKPQTVPQ…QTWLKKVYNE (83 aa)).

The protein is Putative SWIB domain-containing protein R508 of Acanthamoeba polyphaga mimivirus (APMV).